The sequence spans 364 residues: Lysophosphatidic acid receptor 1 (364 aa).

Residues 1-50 are Extracellular-facing; it reads MAAISTSIPVISQPQFTAMNEPQCFYNESIAFFYNRSGKHLATEWNTVSK. Disulfide bonds link C24–C190 and C188–C195. 2 N-linked (GlcNAc...) asparagine glycosylation sites follow: N27 and N35. K39 is a binding site for a 1-acyl-sn-glycero-3-phosphate. A helical transmembrane segment spans residues 51-75; it reads LVMGLGITVCIFIMLANLLVMVAIY. The Cytoplasmic segment spans residues 76–83; the sequence is VNRRFHFP. Residues 84–107 form a helical membrane-spanning segment; that stretch reads IYYLMANLAAADFFAGLAYFYLMF. Over 108–121 the chain is Extracellular; that stretch reads NTGPNTRRLTVSTW. The helical transmembrane segment at 122–144 threads the bilayer; the sequence is LLRQGLIDTSLTASVANLLAIAI. 124-129 is an a 1-acyl-sn-glycero-3-phosphate binding site; the sequence is RQGLID. The Cytoplasmic portion of the chain corresponds to 145-163; it reads ERHITVFRMQLHTRMSNRR. Residues 164–184 traverse the membrane as a helical segment; the sequence is VVVVIVVIWTMAIVMGAIPSV. Topologically, residues 185-204 are extracellular; it reads GWNCICDIENCSNMAPLYSD. The chain crosses the membrane as a helical span at residues 205-225; the sequence is SYLVFWAIFNLVTFVVMVVLY. A 1-acyl-sn-glycero-3-phosphate is bound at residue W210. Over 226 to 255 the chain is Cytoplasmic; it reads AHIFGYVRQRTMRMSRHSSGPRRNRDTMMS. Residues 256 to 280 form a helical membrane-spanning segment; the sequence is LLKTVVIVLGAFIICWTPGLVLLLL. Residues 281-294 are Extracellular-facing; that stretch reads DVCCPQCDVLAYEK. C284 and C287 form a disulfide bridge. The chain crosses the membrane as a helical span at residues 295–315; that stretch reads FFLLLAEFNSAMNPIIYSYRD. The Cytoplasmic portion of the chain corresponds to 316-364; it reads KEMSATFRQILCCQRSENPTGPTEGSDRSASSLNHTILAGVHSNDHSVV. At S341 the chain carries Phosphoserine. T351 carries the phosphothreonine modification.

It belongs to the G-protein coupled receptor 1 family. In terms of assembly, interacts with RALA and GRK2. Interacts with GNAQ and GNA13. Interacts with CD14; the interaction is enhanced by exposure to bacterial lipopolysaccharide (LPS). N-glycosylated. As to expression, expressed in many adult organs, including brain, heart, colon, small intestine, placenta, prostate, ovary, pancreas, testes, spleen, skeletal muscle, and kidney. Little or no expression in liver, lung, thymus, or peripheral blood leukocytes. Detected in lung fibroblasts from bronchoalveolar fluid from patients with idiopathic pulmonary fibrosis. Detected in bone marrow-derived mesenchymal stem cells.

It localises to the cell surface. The protein localises to the cell membrane. It is found in the endosome. In terms of biological role, receptor for lysophosphatidic acid (LPA). Plays a role in the reorganization of the actin cytoskeleton, cell migration, differentiation and proliferation, and thereby contributes to the responses to tissue damage and infectious agents. Activates downstream signaling cascades via the G(i)/G(o), G(12)/G(13), and G(q) families of heteromeric G proteins. Signaling inhibits adenylyl cyclase activity and decreases cellular cAMP levels. Signaling triggers an increase of cytoplasmic Ca(2+) levels. Activates RALA; this leads to the activation of phospholipase C (PLC) and the formation of inositol 1,4,5-trisphosphate. Signaling mediates activation of down-stream MAP kinases. Contributes to the regulation of cell shape. Promotes Rho-dependent reorganization of the actin cytoskeleton in neuronal cells and neurite retraction. Promotes the activation of Rho and the formation of actin stress fibers. Promotes formation of lamellipodia at the leading edge of migrating cells via activation of RAC1. Through its function as LPA receptor, plays a role in chemotaxis and cell migration, including responses to injury and wounding. Plays a role in triggering inflammation in response to bacterial lipopolysaccharide (LPS) via its interaction with CD14. Promotes cell proliferation in response to LPA. Inhibits the intracellular ciliogenesis pathway in response to LPA and through AKT1 activation. Required for normal skeleton development. May play a role in osteoblast differentiation. Required for normal brain development. Required for normal proliferation, survival and maturation of newly formed neurons in the adult dentate gyrus. Plays a role in pain perception and in the initiation of neuropathic pain. The protein is Lysophosphatidic acid receptor 1 (LPAR1) of Homo sapiens (Human).